The following is a 209-amino-acid chain: Dual specificity protein phosphatase 22 (209 aa).

Residues 4-144 form the Tyrosine-protein phosphatase domain; it reads GMNKILPSLF…LEDFGKHDVY (141 aa). Cys-88 acts as the Phosphocysteine intermediate in catalysis. The tract at residues 170 to 193 is disordered; that stretch reads DKHKQQEAAESQSATSSGRQWSSH. Positions 177-193 are enriched in low complexity; sequence AAESQSATSSGRQWSSH.

The protein belongs to the protein-tyrosine phosphatase family. Non-receptor class dual specificity subfamily.

It is found in the cytoplasm. It localises to the nucleus. It carries out the reaction O-phospho-L-tyrosyl-[protein] + H2O = L-tyrosyl-[protein] + phosphate. The enzyme catalyses O-phospho-L-seryl-[protein] + H2O = L-seryl-[protein] + phosphate. The catalysed reaction is O-phospho-L-threonyl-[protein] + H2O = L-threonyl-[protein] + phosphate. Activates the Jnk signaling pathway. Dephosphorylates and deactivates p38 and stress-activated protein kinase/c-Jun N-terminal kinase (SAPK/JNK). The chain is Dual specificity protein phosphatase 22 (dusp22) from Xenopus tropicalis (Western clawed frog).